Consider the following 124-residue polypeptide: Urocortin (124 aa).

A signal peptide spans 1–25 (MRQAGRAALLAALLLLVQLCPGSSQ). Residues 23–46 (SSQRSPEAAGVQDPSLRWSPGARN) form a disordered region. The propeptide occupies 26-82 (RSPEAAGVQDPSLRWSPGARNQGGGARALLLLLAERFPRRAGPGRLGLGTAGERPRR). Val122 is subject to Valine amide.

Belongs to the sauvagine/corticotropin-releasing factor/urotensin I family. In terms of assembly, interacts with CRHR1 and CRHR2 (via their N-terminal extracellular domain). In terms of tissue distribution, keratinocytes in epidermis and the outer and inner root sheaths of hair follicles, epithelium of sebaceous and sweat glands, erector pili muscle, cutaneous blood vessel walls, cutaneous nerves and dermal mononuclear cells. Detected in plasma cells in the lamia propria in colon mucosa (at protein level). Expressed in pituitary and adrenal glands. Detected in plasma cells in the lamia propria in colon mucosa.

The protein localises to the secreted. In terms of biological role, acts in vitro to stimulate the secretion of adrenocorticotropic hormone (ACTH). Binds with high affinity to CRF receptor types 1, 2-alpha, and 2-beta. Plays a role in the establishment of normal hearing thresholds. Reduces food intake and regulates ghrelin levels in gastric body and plasma. The protein is Urocortin (UCN) of Homo sapiens (Human).